The sequence spans 128 residues: 2-iminobutanoate/2-iminopropanoate deaminase (128 aa).

This sequence belongs to the RutC family.

The protein localises to the cytoplasm. It carries out the reaction 2-iminobutanoate + H2O = 2-oxobutanoate + NH4(+). It catalyses the reaction 2-iminopropanoate + H2O = pyruvate + NH4(+). Its function is as follows. Catalyzes the hydrolytic deamination of enamine/imine intermediates that form during the course of normal metabolism. May facilitate the release of ammonia from these potentially toxic reactive metabolites, reducing their impact on cellular components. It may act on enamine/imine intermediates formed by several types of pyridoxal-5'-phosphate-dependent dehydratases including L-threonine dehydratase. Preferentially digests Leu and Met in cooperation with L-amino acid oxidase, but digests Phe poorly. The chain is 2-iminobutanoate/2-iminopropanoate deaminase from Dermatophagoides farinae (American house dust mite).